The sequence spans 88 residues: Small ribosomal subunit protein uS17 (88 aa).

This sequence belongs to the universal ribosomal protein uS17 family. As to quaternary structure, part of the 30S ribosomal subunit.

In terms of biological role, one of the primary rRNA binding proteins, it binds specifically to the 5'-end of 16S ribosomal RNA. The chain is Small ribosomal subunit protein uS17 from Lactobacillus helveticus (strain DPC 4571).